A 346-amino-acid polypeptide reads, in one-letter code: Holliday junction branch migration complex subunit RuvB (346 aa).

Positions 1 to 188 are large ATPase domain (RuvB-L); the sequence is MSDEYGPPER…FGIVQRLAYY (188 aa). ATP-binding positions include L27, R28, G69, K72, T73, T74, 135-137, R178, Y188, and R225; that span reads EDF. T73 lines the Mg(2+) pocket. The tract at residues 189–259 is small ATPAse domain (RuvB-S); that stretch reads PVDELTRIVQ…VAADAMELLD (71 aa). The head domain (RuvB-H) stretch occupies residues 262 to 346; the sequence is RNGLDEQDRR…QAAGSGDLFG (85 aa). DNA-binding residues include R298, R317, and R322.

It belongs to the RuvB family. In terms of assembly, homohexamer. Forms an RuvA(8)-RuvB(12)-Holliday junction (HJ) complex. HJ DNA is sandwiched between 2 RuvA tetramers; dsDNA enters through RuvA and exits via RuvB. An RuvB hexamer assembles on each DNA strand where it exits the tetramer. Each RuvB hexamer is contacted by two RuvA subunits (via domain III) on 2 adjacent RuvB subunits; this complex drives branch migration. In the full resolvosome a probable DNA-RuvA(4)-RuvB(12)-RuvC(2) complex forms which resolves the HJ.

It localises to the cytoplasm. It carries out the reaction ATP + H2O = ADP + phosphate + H(+). Its function is as follows. The RuvA-RuvB-RuvC complex processes Holliday junction (HJ) DNA during genetic recombination and DNA repair, while the RuvA-RuvB complex plays an important role in the rescue of blocked DNA replication forks via replication fork reversal (RFR). RuvA specifically binds to HJ cruciform DNA, conferring on it an open structure. The RuvB hexamer acts as an ATP-dependent pump, pulling dsDNA into and through the RuvAB complex. RuvB forms 2 homohexamers on either side of HJ DNA bound by 1 or 2 RuvA tetramers; 4 subunits per hexamer contact DNA at a time. Coordinated motions by a converter formed by DNA-disengaged RuvB subunits stimulates ATP hydrolysis and nucleotide exchange. Immobilization of the converter enables RuvB to convert the ATP-contained energy into a lever motion, pulling 2 nucleotides of DNA out of the RuvA tetramer per ATP hydrolyzed, thus driving DNA branch migration. The RuvB motors rotate together with the DNA substrate, which together with the progressing nucleotide cycle form the mechanistic basis for DNA recombination by continuous HJ branch migration. Branch migration allows RuvC to scan DNA until it finds its consensus sequence, where it cleaves and resolves cruciform DNA. The protein is Holliday junction branch migration complex subunit RuvB of Halorhodospira halophila (strain DSM 244 / SL1) (Ectothiorhodospira halophila (strain DSM 244 / SL1)).